The following is a 411-amino-acid chain: Dihydrofolate synthase/folylpolyglutamate synthase (411 aa).

53 to 56 (GKGT) is a binding site for ATP. S77 is a binding site for Mg(2+). 7,8-dihydropteroate is bound by residues 116-119 (TYFE) and 147-149 (LDA). Position 167 (H167) interacts with Mg(2+). Positions 283 and 296 each coordinate ATP.

Belongs to the folylpolyglutamate synthase family. In terms of assembly, monomer. Mg(2+) serves as cofactor.

It carries out the reaction 7,8-dihydropteroate + L-glutamate + ATP = 7,8-dihydrofolate + ADP + phosphate + H(+). It catalyses the reaction (6S)-5,6,7,8-tetrahydrofolyl-(gamma-L-Glu)(n) + L-glutamate + ATP = (6S)-5,6,7,8-tetrahydrofolyl-(gamma-L-Glu)(n+1) + ADP + phosphate + H(+). The enzyme catalyses 10-formyltetrahydrofolyl-(gamma-L-Glu)(n) + L-glutamate + ATP = 10-formyltetrahydrofolyl-(gamma-L-Glu)(n+1) + ADP + phosphate + H(+). The catalysed reaction is (6R)-5,10-methylenetetrahydrofolyl-(gamma-L-Glu)(n) + L-glutamate + ATP = (6R)-5,10-methylenetetrahydrofolyl-(gamma-L-Glu)(n+1) + ADP + phosphate + H(+). It participates in cofactor biosynthesis; tetrahydrofolate biosynthesis; 7,8-dihydrofolate from 2-amino-4-hydroxy-6-hydroxymethyl-7,8-dihydropteridine diphosphate and 4-aminobenzoate: step 2/2. The protein operates within cofactor biosynthesis; tetrahydrofolylpolyglutamate biosynthesis. In terms of biological role, functions in two distinct reactions of the de novo folate biosynthetic pathway. Catalyzes the addition of a glutamate residue to dihydropteroate (7,8-dihydropteroate or H2Pte) to form dihydrofolate (7,8-dihydrofolate monoglutamate or H2Pte-Glu). Also catalyzes successive additions of L-glutamate to tetrahydrofolate or 10-formyltetrahydrofolate or 5,10-methylenetetrahydrofolate, leading to folylpolyglutamate derivatives. This chain is Dihydrofolate synthase/folylpolyglutamate synthase (folC), found in Buchnera aphidicola subsp. Acyrthosiphon pisum (strain APS) (Acyrthosiphon pisum symbiotic bacterium).